The following is a 424-amino-acid chain: S-phase kinase-associated protein 2 (424 aa).

The interval 52–73 (PHGLLSNLGHPQSPPRKRVKGK) is disordered. Phosphoserine is present on serine 64. Positions 67–73 (RKRVKGK) match the Nuclear localization signal motif. An N6-acetyllysine; by p300/EP300 mark is found at lysine 68 and lysine 71. Position 75 is a phosphoserine (serine 75). The 47-residue stretch at 94–140 (GVSWDSLPDELLLGIFSCLCLPELLRVSGVCKRWYRLSLDESLWQSL) folds into the F-box domain. LRR repeat units lie at residues 151–176 (VTVR…PLGE), 177–204 (SFSS…ILSE), 210–234 (NLSL…NLVR), 235–257 (LNLC…SCSR), 258–284 (LDEL…LPNT), 286–308 (TQLN…IIKR), 309–330 (CPNL…CFPE), 334–356 (LNYL…LLEL), 359–378 (IPTL…TLQL), and 380–401 (REAL…RPTM). The residue at position 179 (serine 179) is a Phosphoserine.

As to quaternary structure, part of a SCF(SKP2) complex consisting of CUL1, RBX1, SKP1 and SKP2. Component of a SCF(SKP2)-like complex containing CUL1, SKP1, TRIM21 and SKP2. Interacts directly with CUL1 and SKP1. Interacts with ASB2 which is the substrate-recognition component of a probable ECS E3 ubiquitin-protein ligase complex; ASB2 is likely to bridge the formation of dimeric E3-ubiquitin-protein ligase complexes composed of an ECS complex and an SCF(SKP2) complex. Interacts with CKS1. Interacts with the cyclin-A-CDK2 complex. Interacts with ORC1, phosphorylated CDT1, phosphorylated RBL2, ELF4, phosphorylated RAG2, FOXO1, UBP43, MYC, TOB1, TAL1 and KMT2A/MLL1. Interacts with TRIM21. Interacts with cyclin-E. Interacts with CARM1. Phosphorylated on serine and threonine resudues in response to DNA damage, promoting 'Lys-63'-linked ubiquitination of NBN. Post-translationally, ubiquitinated by the APC/C complex, leading to its degradation by the proteasome. Deubiquitinated by USP13. In terms of processing, acetylation at Lys-68 and Lys-71 increases stability through impairment of APC/C-mediated proteolysis and promotes cytoplasmic retention. Deacetylated by SIRT3.

The protein localises to the cytoplasm. It localises to the nucleus. It functions in the pathway protein modification; protein ubiquitination. Substrate recognition component of a SCF (SKP1-CUL1-F-box protein) E3 ubiquitin-protein ligase complex which mediates the ubiquitination and subsequent proteasomal degradation of target proteins involved in cell cycle progression, signal transduction and transcription. Specifically recognizes phosphorylated CDKN1B/p27kip and is involved in regulation of G1/S transition. Degradation of CDKN1B/p27kip also requires CKS1. Recognizes target proteins ORC1, CDT1, RBL2, KMT2A/MLL1, CDK9, RAG2, NBN, FOXO1, UBP43, YTHDF2, and probably MYC, TOB1 and TAL1. Degradation of TAL1 also requires STUB1. Recognizes CDKN1A in association with CCNE1 or CCNE2 and CDK2. Promotes ubiquitination and destruction of CDH1 in a CK1-dependent manner, thereby regulating cell migration. Following phosphorylation in response to DNA damage, mediates 'Lys-63'-linked ubiquitination of NBN, promoting ATM recruitment to DNA damage sites and DNA repair via homologous recombination. Its function is as follows. Through the ubiquitin-mediated proteasomal degradation of viral proteins may have an antiviral activity. In Mus musculus (Mouse), this protein is S-phase kinase-associated protein 2 (Skp2).